The primary structure comprises 159 residues: MSDEEHHFESKADAGASKTYPQQAGTIRKSGHIVIKNRPCKVVEVSTSKTGKHGHAKCHFVAIDIFTGKKLEDIVPSSHNCDVPHVNRTDYQLIDISEDGFVSLLTENGNTKDDLRLPTDDTLLAQVKDGFAEGKDLVLSVMSAMGEEQICGIKDIGPK.

A compositionally biased stretch (basic and acidic residues) spans 1–12 (MSDEEHHFESKA). Positions 1 to 23 (MSDEEHHFESKADAGASKTYPQQ) are disordered. A Hypusine modification is found at K52.

It belongs to the eIF-5A family. Post-translationally, lys-52 undergoes hypusination, a unique post-translational modification that consists in the addition of a butylamino group from spermidine to lysine side chain, leading to the formation of the unusual amino acid hypusine. eIF-5As are the only known proteins to undergo this modification, which is essential for their function.

Functionally, translation factor that promotes translation elongation and termination, particularly upon ribosome stalling at specific amino acid sequence contexts. Binds between the exit (E) and peptidyl (P) site of the ribosome and promotes rescue of stalled ribosome: specifically required for efficient translation of polyproline-containing peptides as well as other motifs that stall the ribosome. Acts as a ribosome quality control (RQC) cofactor by joining the RQC complex to facilitate peptidyl transfer during CAT tailing step. This chain is Eukaryotic translation initiation factor 5A-5 (EIF5A5), found in Solanum tuberosum (Potato).